The sequence spans 84 residues: Kunitz-type serine protease inhibitor B6 (84 aa).

Residues Met1 to Ser24 form the signal peptide. Residues Cys31–Cys81 enclose the BPTI/Kunitz inhibitor domain. Disulfide bonds link Cys31-Cys81, Cys40-Cys64, and Cys56-Cys77.

It belongs to the venom Kunitz-type family. As to expression, expressed by the venom gland.

It is found in the secreted. Serine protease inhibitor that inhibits trypsin. In Daboia siamensis (Eastern Russel's viper), this protein is Kunitz-type serine protease inhibitor B6.